We begin with the raw amino-acid sequence, 710 residues long: Prolyl endopeptidase (710 aa).

Met-1 is modified (N-acetylmethionine). Position 157 is an N6-acetyllysine (Lys-157). Residues Ser-554, Asp-641, and His-680 each act as charge relay system in the active site.

The protein belongs to the peptidase S9A family.

The protein localises to the cytoplasm. It catalyses the reaction Hydrolysis of Pro-|-Xaa &gt;&gt; Ala-|-Xaa in oligopeptides.. Functionally, cleaves peptide bonds on the C-terminal side of prolyl residues within peptides that are up to approximately 30 amino acids long. This chain is Prolyl endopeptidase (Prep), found in Mus musculus (Mouse).